Consider the following 908-residue polypeptide: Structural core protein VP2 (908 aa).

Polar residues predominate over residues M1–P19. The interval M1–E25 is disordered.

The protein belongs to the orbivirus VP3 family.

It is found in the virion. This is Structural core protein VP2 (Segment-2) from Ixodes (gulls).